Here is a 556-residue protein sequence, read N- to C-terminus: Formate--tetrahydrofolate ligase (556 aa).

ATP is bound at residue 65-72 (TPAGEGKS).

Belongs to the formate--tetrahydrofolate ligase family.

The catalysed reaction is (6S)-5,6,7,8-tetrahydrofolate + formate + ATP = (6R)-10-formyltetrahydrofolate + ADP + phosphate. It functions in the pathway one-carbon metabolism; tetrahydrofolate interconversion. This chain is Formate--tetrahydrofolate ligase, found in Streptococcus pneumoniae (strain Hungary19A-6).